Reading from the N-terminus, the 466-residue chain is Ras-GEF domain-containing family member 1C (466 aa).

Over residues 1-23 (MPQTLSASDMVTPGSLSPPTTEP) the composition is skewed to polar residues. Disordered regions lie at residues 1–35 (MPQT…PLLD) and 443–466 (SESP…LGKT). One can recognise an N-terminal Ras-GEF domain in the interval 34-164 (LDGAPSSASL…LLQALHQKLA (131 aa)). The Ras-GEF domain maps to 200–446 (DPYTLAQQLT…YLASYESESP (247 aa)).

Its function is as follows. Guanine nucleotide exchange factor (GEF). The protein is Ras-GEF domain-containing family member 1C (RASGEF1C) of Macaca fascicularis (Crab-eating macaque).